Reading from the N-terminus, the 237-residue chain is Mannose-specific lectin alpha chain (237 aa).

The Mn(2+) site is built by E8 and D10. Ca(2+) contacts are provided by D10, Y12, N14, and D19. Y12 provides a ligand contact to a carbohydrate. 3 residues coordinate Mn(2+): D19, H24, and S34. 99-100 (LY) contacts a carbohydrate. D208 is a Ca(2+) binding site. R228 is an a carbohydrate binding site.

It belongs to the leguminous lectin family. In terms of assembly, homotetramer. Post-translationally, the beta and gamma chains are produced by partial proteolytic processing of the lectin alpha chain by an asparaginyl endopeptidase.

D-mannose/D-glucose-binding lectin. Also binds derivatives of glucose and mannose such as more complex glycans. The chain is Mannose-specific lectin alpha chain from Cymbosema roseum (Dioclea purpurea).